The primary structure comprises 212 residues: MNIFRLTGDLSHLAAIIILLLKIWKSRSCAGISGKSQILFALVFTTRYLDLLTSFISLYNTCMKVIYIGCAYATVYLIYAKFRATYDGNHDTFRAEFLVVPVGGLAFLVNHDFSPLEILWTFSIYLESVAILPQLFMISKTGEAETITTHYLFCLGVYRALYLFNWIWRFYFEGFFDMIAIVAGVVQTILYCDFFYLYVTKVLKGKKLSLPA.

Topologically, residues 1–4 (MNIF) are lumenal. A helical membrane pass occupies residues 5-24 (RLTGDLSHLAAIIILLLKIW). Over 25–32 (KSRSCAGI) the chain is Cytoplasmic. Residues 33–52 (SGKSQILFALVFTTRYLDLL) traverse the membrane as a helical segment. The interval 47–48 (RY) is interaction with the K-D-E-L motif on target proteins. Over 53–58 (TSFISL) the chain is Lumenal. Residues 59–79 (YNTCMKVIYIGCAYATVYLIY) form a helical membrane-spanning segment. Over 80–92 (AKFRATYDGNHDT) the chain is Cytoplasmic. The helical transmembrane segment at 93–110 (FRAEFLVVPVGGLAFLVN) threads the bilayer. Residues 111 to 116 (HDFSPL) are Lumenal-facing. A helical transmembrane segment spans residues 117 to 135 (EILWTFSIYLESVAILPQL). Residues 136–149 (FMISKTGEAETITT) are Cytoplasmic-facing. The helical transmembrane segment at 150-168 (HYLFCLGVYRALYLFNWIW) threads the bilayer. The interval 159–169 (RALYLFNWIWR) is interaction with the K-D-E-L motif on target proteins. Topologically, residues 169–178 (RFYFEGFFDM) are lumenal. Residues 179–199 (IAIVAGVVQTILYCDFFYLYV) traverse the membrane as a helical segment. Residues 200 to 212 (TKVLKGKKLSLPA) are Cytoplasmic-facing. Positions 204-207 (KGKK) are important for recycling of cargo proteins with the sequence motif K-D-E-L from the Golgi to the endoplasmic reticulum.

Belongs to the ERD2 family.

It localises to the endoplasmic reticulum membrane. The protein localises to the golgi apparatus membrane. Its subcellular location is the cytoplasmic vesicle. It is found in the COPI-coated vesicle membrane. Functionally, receptor for the C-terminal sequence motif K-D-E-L that is present on endoplasmic reticulum resident proteins and that mediates their recycling from the Golgi back to the endoplasmic reticulum. Binding is pH dependent, and is optimal at pH 5-5.4. In Danio rerio (Zebrafish), this protein is ER lumen protein-retaining receptor 2 (kdelr2).